Consider the following 206-residue polypeptide: Large ribosomal subunit protein uL4 (206 aa).

Residues 51–76 (AKTRAEVSGGGIKPWRQKGTGRARQG) form a disordered region.

It belongs to the universal ribosomal protein uL4 family. In terms of assembly, part of the 50S ribosomal subunit.

In terms of biological role, one of the primary rRNA binding proteins, this protein initially binds near the 5'-end of the 23S rRNA. It is important during the early stages of 50S assembly. It makes multiple contacts with different domains of the 23S rRNA in the assembled 50S subunit and ribosome. Its function is as follows. Forms part of the polypeptide exit tunnel. The protein is Large ribosomal subunit protein uL4 of Clostridium kluyveri (strain ATCC 8527 / DSM 555 / NBRC 12016 / NCIMB 10680 / K1).